Reading from the N-terminus, the 559-residue chain is MARTTSQLYDAVPIQSSVVLCSCPSPSMVRSQTEPSSSPGIPSGVSRQGSTMDGTTAEARPSTNPLQQHPAQLPPQPRKKRPEDFKFGKILGEGSFSTVVLARELATSREYAIKILEKRHIIKENKVPYVTRERDVMSRLDHPFFVKLYFTFQDDEKLYFGLSYAKNGELLKYIRKIGSFDETCTRFYTAEIVSALEYLHGKGIIHRDLKPENILLNEDMHIQITDFGTAKVLSPDSKQARANSFVGTAQYVSPELLTEKSACKSSDLWALGCIIYQLVAGLPPFRAGNEYLIFQKIIKLEYDFPEKFFPKARDLVEKLLVLDATKRLGCEEMEGYGPLKAHPFFESITWENLHQQTPPKLTAYLPAMSEDDEDCYGNYDNLLSQFGCMQVSSSSSSHSLSAVDASLPQRSGSNIEQYIHDLDTNSFELDLQFSEDEKRLLLEKQAGGNPWHQFVENNLILKMGPVDKRKGLFARRRQLLLTEGPHLYYVDPVNKVLKGEIPWSQELRPEAKNFKTFFVHTPNRTYYLMDPSGNAHKWCRKIQEVWRQQYQSSPDAAVQ.

Position 9 is a phosphotyrosine; by SRC and INSR (Tyr9). Ser25 bears the Phosphoserine mark. Residues 25 to 83 form a disordered region; that stretch reads SPSMVRSQTEPSSSPGIPSGVSRQGSTMDGTTAEARPSTNPLQQHPAQLPPQPRKKRPE. Residues 35 to 46 are compositionally biased toward low complexity; it reads PSSSPGIPSGVS. In terms of domain architecture, Protein kinase spans 85 to 345; that stretch reads FKFGKILGEG…YGPLKAHPFF (261 aa). ATP-binding positions include 95 to 97 and Lys114; that span reads SFS. Positions 116–160 are PIF-pocket; sequence LEKRHIIKENKVPYVTRERDVMSRLDHPFFVKLYFTFQDDEKLYF. ATP-binding positions include 163 to 165 and Glu169; that span reads SYA. Residue Asp208 is the Proton acceptor of the active site. 2 residues coordinate ATP: Glu212 and Asp226. At Ser244 the chain carries Phosphoserine. At Lys307 the chain carries N6-acetyllysine. Thr357 bears the Phosphothreonine; by MELK mark. Residues Tyr376 and Tyr379 each carry the phosphotyrosine; by SRC and INSR modification. The residue at position 396 (Ser396) is a Phosphoserine. Phosphoserine; by MAP3K5 is present on Ser397. Position 399 is a phosphoserine (Ser399). Ser401 is modified (phosphoserine; by MAP3K5). Ser413 carries the phosphoserine modification. The 92-residue stretch at 462 to 553 folds into the PH domain; the sequence is KMGPVDKRKG…EVWRQQYQSS (92 aa). Ser504 is subject to Phosphoserine; by PKC/PRKCQ. Position 516 is a phosphothreonine; by autocatalysis (Thr516). Ser532 carries the phosphoserine; by PKC/PRKCQ modification.

Belongs to the protein kinase superfamily. AGC Ser/Thr protein kinase family. PDPK1 subfamily. In terms of assembly, homodimer in its autoinhibited state. Active as monomer. Interacts with NPRL2, PPARG, PAK1, PTK2B, GRB14, PKN1 (via C-terminus), STRAP and IKKB. The Tyr-9 phosphorylated form interacts with SRC, RASA1 and CRK (via their SH2 domains). Interacts with SGK3 in a phosphorylation-dependent manner. The tyrosine-phosphorylated form interacts with PTPN6. The Ser-244 phosphorylated form interacts with YWHAH and YWHAQ. Binds INSR in response to insulin. Interacts (via PH domain) with SMAD3, SMAD4 and SMAD7. Interacts with PKN2; the interaction stimulates PDPK1 autophosphorylation, its PI(3,4,5)P3-dependent kinase activity toward 'Ser-473' of AKT1 but also activates its kinase activity toward PRKCD and PRKCZ. Phosphorylation on Ser-244 in the activation loop is required for full activity. PDPK1 itself can autophosphorylate Ser-244, leading to its own activation. Autophosphorylation is inhibited by the apoptotic C-terminus cleavage product of PKN2. Tyr-9 phosphorylation is critical for stabilization of both PDPK1 and the PDPK1/SRC complex via HSP90-mediated protection of PDPK1 degradation. Angiotensin II stimulates the tyrosine phosphorylation of PDPK1 in vascular smooth muscle in a calcium- and SRC-dependent manner. Phosphorylated on Tyr-9, Tyr-376 and Tyr-379 by INSR in response to insulin. Palmitate negatively regulates autophosphorylation at Ser-244 and palmitate-induced phosphorylation at Ser-532 and Ser-504 by PKC/PRKCQ negatively regulates its ability to phosphorylate PKB/AKT1. Phosphorylation at Thr-357 by MELK partially inhibits kinase activity, the inhibition is cooperatively enhanced by phosphorylation at Ser-397 and Ser-401 by MAP3K5. In terms of processing, monoubiquitinated in the kinase domain, deubiquitinated by USP4.

The protein localises to the cytoplasm. It is found in the nucleus. It localises to the cell membrane. The protein resides in the cell junction. Its subcellular location is the focal adhesion. The catalysed reaction is L-seryl-[protein] + ATP = O-phospho-L-seryl-[protein] + ADP + H(+). It catalyses the reaction L-threonyl-[protein] + ATP = O-phospho-L-threonyl-[protein] + ADP + H(+). With respect to regulation, homodimerization regulates its activity by maintaining the kinase in an autoinhibitory conformation. NPRL2 down-regulates its activity by interfering with tyrosine phosphorylation at the Tyr-9, Tyr-376 and Tyr-379 residues. The 14-3-3 protein YWHAQ acts as a negative regulator by association with the residues surrounding the Ser-244 residue. STRAP positively regulates its activity by enhancing its autophosphorylation and by stimulating its dissociation from YWHAQ. SMAD2, SMAD3, SMAD4 and SMAD7 also positively regulate its activity by stimulating its dissociation from YWHAQ. Activated by phosphorylation on Tyr-9, Tyr-376 and Tyr-379 by INSR in response to insulin. Functionally, serine/threonine kinase which acts as a master kinase, phosphorylating and activating a subgroup of the AGC family of protein kinases. Its targets include: protein kinase B (PKB/AKT1, PKB/AKT2, PKB/AKT3), p70 ribosomal protein S6 kinase (RPS6KB1), p90 ribosomal protein S6 kinase (RPS6KA1, RPS6KA2 and RPS6KA3), cyclic AMP-dependent protein kinase (PRKACA), protein kinase C (PRKCD and PRKCZ), serum and glucocorticoid-inducible kinase (SGK1, SGK2 and SGK3), p21-activated kinase-1 (PAK1), TSSK3, protein kinase PKN (PKN1 and PKN2). Plays a central role in the transduction of signals from insulin by providing the activating phosphorylation to PKB/AKT1, thus propagating the signal to downstream targets controlling cell proliferation and survival, as well as glucose and amino acid uptake and storage. Negatively regulates the TGF-beta-induced signaling by: modulating the association of SMAD3 and SMAD7 with TGF-beta receptor, phosphorylating SMAD2, SMAD3, SMAD4 and SMAD7, preventing the nuclear translocation of SMAD3 and SMAD4 and the translocation of SMAD7 from the nucleus to the cytoplasm in response to TGF-beta. Activates PPARG transcriptional activity and promotes adipocyte differentiation. Activates the NF-kappa-B pathway via phosphorylation of IKKB. The tyrosine phosphorylated form is crucial for the regulation of focal adhesions by angiotensin II. Controls proliferation, survival, and growth of developing pancreatic cells. Participates in the regulation of Ca(2+) entry and Ca(2+)-activated K(+) channels of mast cells. Essential for the motility of vascular endothelial cells (ECs) and is involved in the regulation of their chemotaxis. Plays a critical role in cardiac homeostasis by serving as a dual effector for cell survival and beta-adrenergic response. Plays an important role during thymocyte development by regulating the expression of key nutrient receptors on the surface of pre-T cells and mediating Notch-induced cell growth and proliferative responses. Provides negative feedback inhibition to toll-like receptor-mediated NF-kappa-B activation in macrophages. This is 3-phosphoinositide-dependent protein kinase 1 (Pdpk1) from Rattus norvegicus (Rat).